We begin with the raw amino-acid sequence, 77 residues long: UPF0346 protein LMOf2365_1885 (77 aa).

The protein belongs to the UPF0346 family.

The chain is UPF0346 protein LMOf2365_1885 from Listeria monocytogenes serotype 4b (strain F2365).